Consider the following 192-residue polypeptide: MKEELDAFHQIFTTTKEAIERFMAMLTPVIENAEDDHERLYYHHIYEEEEQRLSRLDVLIPLIEKFQDETDEGLFSPSNNAFNRLLQELNLEKFGLHNFIEHVDLALFSFTDEERQTLLKELRKDAYEGYQYVKEKLAEINARFDHDYADPHAHHDEHRDHLADMPSAGSSHEEVQPVAHKKKGFTVGSLIQ.

3 residues coordinate Fe(3+): H44, E48, and H102. The tract at residues 143-179 is linker; that stretch reads RFDHDYADPHAHHDEHRDHLADMPSAGSSHEEVQPVA. Basic and acidic residues predominate over residues 149–163; that stretch reads ADPHAHHDEHRDHLA. The segment at 149–192 is disordered; it reads ADPHAHHDEHRDHLADMPSAGSSHEEVQPVAHKKKGFTVGSLIQ. The interval 180–192 is targeting peptide; the sequence is HKKKGFTVGSLIQ.

In terms of assembly, homodimer, with 2 Fe atoms bound at the subunit interface (without encapsulin), probably also a dimer when encapsulated. 42 electron-dense accretions can be seen inside the nanocompartment which are probably this cargo protein, although perhaps up to one cargo dimer can be bound per shell protein.

It localises to the encapsulin nanocompartment. It carries out the reaction 4 Fe(2+) + O2 + 4 H(+) = 4 Fe(3+) + 2 H2O. Its function is as follows. Cargo protein of a type 1 encapsulin nanocompartment. A ferritin-like iron-binding protein probably involved in iron mineralization in the encapsulin nanocompartment. Has ferroxidase activity even when encapsulated, the rate is probably controlled by the rate of Fe flux across the nanocompartment pores. Part of the iron-mineralizing encapsulin-associated Firmicute (IMEF) system. 2 different cargo proteins have been identified (IMEF and Fer); when both are expressed in E.coli with the shell protein only IMEF is detected within the nanocompartment. E.coli expressing all 3 genes stores the largest amount of iron and is protected from Fe/H2O2-induced oxidative stress. The chain is Ferritin-like protein from Bacillus thermotolerans (Quasibacillus thermotolerans).